A 229-amino-acid polypeptide reads, in one-letter code: Trypsin (229 aa).

Positions 1-7 (APDDDDK) are cleaved as a propeptide — activation peptide. The Peptidase S1 domain occupies 8-227 (IVGGYECPKH…YVSWIHETIA (220 aa)). Cystine bridges form between cysteine 14/cysteine 143, cysteine 32/cysteine 48, cysteine 116/cysteine 216, cysteine 123/cysteine 189, cysteine 154/cysteine 168, and cysteine 179/cysteine 203. The active-site Charge relay system is histidine 47. Ca(2+) contacts are provided by glutamate 59 and glutamate 69. Aspartate 91 (charge relay system) is an active-site residue. Residue serine 183 is the Charge relay system of the active site.

It belongs to the peptidase S1 family. Requires Ca(2+) as cofactor.

Its subcellular location is the secreted. It localises to the extracellular space. The catalysed reaction is Preferential cleavage: Arg-|-Xaa, Lys-|-Xaa.. This Squalus acanthias (Spiny dogfish) protein is Trypsin.